The sequence spans 109 residues: Encapsulin nanocompartment cargo protein EncD (109 aa).

Residue E47 participates in Fe cation binding. The disordered stretch occupies residues 61 to 94 (AGGRGAAAPTPAREAPAEAPRLARGSADELHEAA). A compositionally biased stretch (low complexity) spans 66–85 (AAAPTPAREAPAEAPRLARG). A probable targeting peptide region spans residues 100-106 (LTVGSLR).

The protein resides in the encapsulin nanocompartment. Functionally, cargo protein of a type 1 encapsulin nanocompartment. May help nucleate Fe atoms in the interior of the encapsulin nanocompartment. Present in about 47 copies/encapsulin nanocompartment. This chain is Encapsulin nanocompartment cargo protein EncD, found in Myxococcus xanthus (strain DK1622).